The following is a 459-amino-acid chain: Cysteine--tRNA ligase (459 aa).

Residue Cys28 coordinates Zn(2+). The 'HIGH' region signature appears at 30-40; the sequence is MTVYDFCHLGH. Cys209, His234, and Glu238 together coordinate Zn(2+). The short motif at 266 to 270 is the 'KMSKS' region element; it reads KMAKS. Position 269 (Lys269) interacts with ATP. The interval 440 to 459 is disordered; the sequence is QARGIELEDTPEGTKWRRTR.

This sequence belongs to the class-I aminoacyl-tRNA synthetase family. Monomer. It depends on Zn(2+) as a cofactor.

The protein resides in the cytoplasm. The enzyme catalyses tRNA(Cys) + L-cysteine + ATP = L-cysteinyl-tRNA(Cys) + AMP + diphosphate. The polypeptide is Cysteine--tRNA ligase (Halorhodospira halophila (strain DSM 244 / SL1) (Ectothiorhodospira halophila (strain DSM 244 / SL1))).